A 365-amino-acid chain; its full sequence is uncharacterized protein (365 aa).

It belongs to the NAD(P)-dependent epimerase/dehydratase family.

Its subcellular location is the cytoplasm. The protein resides in the nucleus. This is an uncharacterized protein from Schizosaccharomyces pombe (strain 972 / ATCC 24843) (Fission yeast).